The chain runs to 474 residues: tRNA-2-methylthio-N(6)-dimethylallyladenosine synthase (474 aa).

The region spanning 3–120 (KKLHIKTWGC…LPEMIEQVRR (118 aa)) is the MTTase N-terminal domain. [4Fe-4S] cluster is bound by residues Cys-12, Cys-49, Cys-83, Cys-157, Cys-161, and Cys-164. The Radical SAM core domain maps to 143-375 (RAEGPTAFVS…QDRITQQAMR (233 aa)). A TRAM domain is found at 378–441 (RHMMGTVQRI…TNSLRGVFIR (64 aa)).

It belongs to the methylthiotransferase family. MiaB subfamily. Monomer. The cofactor is [4Fe-4S] cluster.

Its subcellular location is the cytoplasm. The catalysed reaction is N(6)-dimethylallyladenosine(37) in tRNA + (sulfur carrier)-SH + AH2 + 2 S-adenosyl-L-methionine = 2-methylsulfanyl-N(6)-dimethylallyladenosine(37) in tRNA + (sulfur carrier)-H + 5'-deoxyadenosine + L-methionine + A + S-adenosyl-L-homocysteine + 2 H(+). Its function is as follows. Catalyzes the methylthiolation of N6-(dimethylallyl)adenosine (i(6)A), leading to the formation of 2-methylthio-N6-(dimethylallyl)adenosine (ms(2)i(6)A) at position 37 in tRNAs that read codons beginning with uridine. This Shewanella baltica (strain OS155 / ATCC BAA-1091) protein is tRNA-2-methylthio-N(6)-dimethylallyladenosine synthase.